A 1257-amino-acid polypeptide reads, in one-letter code: Neural cell adhesion molecule L1 (1257 aa).

Residues 1 to 19 (MVVALRYVWPLLLCSPCLL) form the signal peptide. The Extracellular segment spans residues 20 to 1120 (IQIPEEYEGH…RLPPAGFATE (1101 aa)). 6 Ig-like C2-type domains span residues 35 to 125 (PVIT…TAMS), 139 to 226 (PKET…EPID), 240 to 328 (PRLL…YYVT), 333 to 420 (PYWL…AYIY), 425 to 507 (PAKI…NNVT), and 518 to 607 (TQIT…AQLL). 2 disulfides stabilise this stretch: Cys-57/Cys-114 and Cys-158/Cys-209. N-linked (GlcNAc...) asparagine glycans are attached at residues Asn-100, Asn-203, Asn-247, and Asn-294. 2 disulfide bridges follow: Cys-264/Cys-312 and Cys-354/Cys-404. N-linked (GlcNAc...) asparagine glycans are attached at residues Asn-433, Asn-479, Asn-490, and Asn-505. Cys-448 and Cys-497 form a disulfide bridge. A disulfide bridge links Cys-539 with Cys-591. The Cell attachment site motif lies at 554–556 (RGD). Asn-588 and Asn-671 each carry an N-linked (GlcNAc...) asparagine glycan. Fibronectin type-III domains follow at residues 615 to 712 (VPRL…TPEA), 717 to 810 (NPVD…SGED), 814 to 916 (AIPE…TPEG), 920 to 1015 (HPEA…MALS), and 1016 to 1115 (GISD…LPPA). The segment at 698-725 (GEPSPVSETVVTPEAAPEKNPVDVKGEG) is disordered. The span at 713–725 (APEKNPVDVKGEG) shows a compositional bias: basic and acidic residues. N-linked (GlcNAc...) asparagine glycosylation is found at Asn-726, Asn-777, Asn-825, Asn-849, Asn-876, Asn-979, Asn-1022, Asn-1030, Asn-1071, and Asn-1105. A helical membrane pass occupies residues 1121–1143 (GWFIGFVSAIILLLLVLLILCFI). Residues 1144–1257 (KRSKGGKYSV…SPINPAVALE (114 aa)) lie on the Cytoplasmic side of the membrane. Residues Ser-1163, Thr-1172, Arg-1177, and Ser-1178 each carry the phosphoserine modification. Residues 1176–1187 (YRSLESDNEEKA) are compositionally biased toward basic and acidic residues. 2 disordered regions span residues 1176 to 1207 (YRSL…SDDS) and 1226 to 1257 (IGQY…VALE). Residue Ser-1181 is modified to Phosphoserine; by CaMK2. Ser-1194, Ser-1243, Ser-1244, and Ser-1248 each carry phosphoserine. The span at 1241 to 1250 (NDSSGATSPI) shows a compositional bias: polar residues.

Belongs to the immunoglobulin superfamily. L1/neurofascin/NgCAM family. Interacts with SHTN1; the interaction occurs in axonal growth cones. Interacts with isoform 2 of BSG.

It localises to the cell membrane. It is found in the cell projection. Its subcellular location is the growth cone. The protein resides in the axon. The protein localises to the dendrite. Neural cell adhesion molecule involved in the dynamics of cell adhesion and in the generation of transmembrane signals at tyrosine kinase receptors. During brain development, critical in multiple processes, including neuronal migration, axonal growth and fasciculation, and synaptogenesis. In the mature brain, plays a role in the dynamics of neuronal structure and function, including synaptic plasticity. This chain is Neural cell adhesion molecule L1 (L1CAM), found in Homo sapiens (Human).